The chain runs to 471 residues: Paraneoplastic antigen-like protein 8A (471 aa).

Disordered stretches follow at residues 188–300 (SAAG…EGSA) and 321–471 (ASRG…PSAV). Positions 238 to 247 (HSRRKRQKKT) are enriched in basic residues. Residues 256-269 (KKSQGSHSHSSASL) show a composition bias toward low complexity. Residues 270–287 (KHPEADDGKNRERLEHVR) are compositionally biased toward basic and acidic residues.

It belongs to the PNMA family.

The polypeptide is Paraneoplastic antigen-like protein 8A (PNMA8A) (Bos taurus (Bovine)).